Consider the following 112-residue polypeptide: Glutaredoxin-C6 (112 aa).

The region spanning 3–103 is the Glutaredoxin domain; sequence LAKAKETVAS…PLLTEAGAIA (101 aa). Cys-23 and Cys-26 form a disulfide bridge.

Belongs to the glutaredoxin family. CPYC subfamily. In terms of processing, the N-terminus is blocked. In terms of tissue distribution, expressed in aleurone layer.

The protein resides in the cytoplasm. Its function is as follows. Has a glutathione-disulfide oxidoreductase activity in the presence of NADPH and glutathione reductase. Reduces low molecular weight disulfides and proteins. Possesses thioltransferase, dehydroascorbate reductase and GSH-dependent peroxidase activities in vitro. The protein is Glutaredoxin-C6 (GRXC6) of Oryza sativa subsp. japonica (Rice).